A 122-amino-acid chain; its full sequence is Biogenesis of lysosome-related organelles complex 1 subunit CNL1 (122 aa).

The span at 1 to 10 shows a compositional bias: basic and acidic residues; that stretch reads MQDNSSHSRE. The interval 1–21 is disordered; that stretch reads MQDNSSHSRESASAGDDPLGI. Residues 63–95 adopt a coiled-coil conformation; sequence ENTIDKNIAKFKELLEKCDTLENHYEMLNQLAI.

Belongs to the BLOC1S4 family. As to quaternary structure, component of the biogenesis of lysosome-related organelles complex-1 (BLOC-1) composed of at least BLI1, BLS1, CNL1, KXD1, SNN1 and VAB2.

The protein localises to the cytoplasm. Functionally, component of the biogenesis of lysosome-related organelles complex-1 (BLOC-1), a complex that is involved in endosomal cargo sorting. This chain is Biogenesis of lysosome-related organelles complex 1 subunit CNL1 (CNL1), found in Saccharomyces cerevisiae (strain ATCC 204508 / S288c) (Baker's yeast).